Here is a 604-residue protein sequence, read N- to C-terminus: Ectonucleoside triphosphate diphosphohydrolase 7 (604 aa).

Residues 1–28 (MARISFSYLCPASWYFTVPTVSPFLRQR) are Cytoplasmic-facing. Residues 29-49 (VAFLGLFFISCLLLLMLIIDF) form a helical membrane-spanning segment. Topologically, residues 50–546 (RHWSASLPRD…QAHGSWFRLS (497 aa)) are vesicular. Glutamate 217 acts as the Proton acceptor in catalysis. An N-linked (GlcNAc...) asparagine glycan is attached at asparagine 330. A disulfide bridge connects residues cysteine 448 and cysteine 477. A helical transmembrane segment spans residues 547 to 567 (FVYNHYLFFACILVVLLAIVL). Residues 568 to 604 (YLLRLRRIHHRQTRASAPLDLLWLEEVVPMMGVQVGP) are Cytoplasmic-facing.

This sequence belongs to the GDA1/CD39 NTPase family. It depends on Ca(2+) as a cofactor. Requires Mg(2+) as cofactor.

It localises to the cytoplasmic vesicle membrane. The enzyme catalyses a ribonucleoside 5'-triphosphate + H2O = a ribonucleoside 5'-diphosphate + phosphate + H(+). It catalyses the reaction UTP + H2O = UDP + phosphate + H(+). The catalysed reaction is GTP + H2O = GDP + phosphate + H(+). It carries out the reaction CTP + H2O = CDP + phosphate + H(+). Its function is as follows. Catalyzes the hydrolysis of nucleoside triphosphates and diphosphates in a calcium- or magnesium-dependent manner. Preferentially hydrolyzes nucleoside 5'-triphosphates, with substrate preference for UTP &gt; GTP &gt; CTP. Hydrolyzes ATP and nucleoside diphosphates only to a minor extent. The sequence is that of Ectonucleoside triphosphate diphosphohydrolase 7 (ENTPD7) from Pongo abelii (Sumatran orangutan).